A 159-amino-acid polypeptide reads, in one-letter code: Large ribosomal subunit protein uL10 (159 aa).

The protein belongs to the universal ribosomal protein uL10 family. Part of the ribosomal stalk of the 50S ribosomal subunit. The N-terminus interacts with L11 and the large rRNA to form the base of the stalk. The C-terminus forms an elongated spine to which L12 dimers bind in a sequential fashion forming a multimeric L10(L12)X complex.

In terms of biological role, forms part of the ribosomal stalk, playing a central role in the interaction of the ribosome with GTP-bound translation factors. In Campylobacter jejuni subsp. jejuni serotype O:6 (strain 81116 / NCTC 11828), this protein is Large ribosomal subunit protein uL10.